The following is a 490-amino-acid chain: Cobyric acid synthase (490 aa).

The GATase cobBQ-type domain occupies 251–444 (GLTIAVIHLP…LHGIFANDAF (194 aa)). Cys-329 functions as the Nucleophile in the catalytic mechanism. Residue His-436 is part of the active site.

It belongs to the CobB/CobQ family. CobQ subfamily.

It functions in the pathway cofactor biosynthesis; adenosylcobalamin biosynthesis. In terms of biological role, catalyzes amidations at positions B, D, E, and G on adenosylcobyrinic A,C-diamide. NH(2) groups are provided by glutamine, and one molecule of ATP is hydrogenolyzed for each amidation. This Roseiflexus castenholzii (strain DSM 13941 / HLO8) protein is Cobyric acid synthase.